We begin with the raw amino-acid sequence, 231 residues long: Putative S-adenosylmethionine-dependent methyltransferase RcsF (231 aa).

Positions V5 to D142 constitute a TsaA-like domain. S-adenosyl-L-methionine-binding positions include P22–Q24, H63–Q64, R91, and L122–T125.

This sequence belongs to the tRNA methyltransferase O family.

In Pseudomonas aeruginosa (strain ATCC 15692 / DSM 22644 / CIP 104116 / JCM 14847 / LMG 12228 / 1C / PRS 101 / PAO1), this protein is Putative S-adenosylmethionine-dependent methyltransferase RcsF (rcsF).